The primary structure comprises 481 residues: Protein nucleotidyltransferase YdiU (481 aa).

ATP-binding residues include Gly-85, Gly-87, Arg-88, Lys-108, Asp-120, Gly-121, Arg-172, and Arg-179. The active-site Proton acceptor is Asp-248. The Mg(2+) site is built by Asn-249 and Asp-258. Asp-258 serves as a coordination point for ATP.

This sequence belongs to the SELO family. The cofactor is Mg(2+). Mn(2+) serves as cofactor.

The enzyme catalyses L-seryl-[protein] + ATP = 3-O-(5'-adenylyl)-L-seryl-[protein] + diphosphate. It catalyses the reaction L-threonyl-[protein] + ATP = 3-O-(5'-adenylyl)-L-threonyl-[protein] + diphosphate. The catalysed reaction is L-tyrosyl-[protein] + ATP = O-(5'-adenylyl)-L-tyrosyl-[protein] + diphosphate. It carries out the reaction L-histidyl-[protein] + UTP = N(tele)-(5'-uridylyl)-L-histidyl-[protein] + diphosphate. The enzyme catalyses L-seryl-[protein] + UTP = O-(5'-uridylyl)-L-seryl-[protein] + diphosphate. It catalyses the reaction L-tyrosyl-[protein] + UTP = O-(5'-uridylyl)-L-tyrosyl-[protein] + diphosphate. Functionally, nucleotidyltransferase involved in the post-translational modification of proteins. It can catalyze the addition of adenosine monophosphate (AMP) or uridine monophosphate (UMP) to a protein, resulting in modifications known as AMPylation and UMPylation. In Cereibacter sphaeroides (strain ATCC 17029 / ATH 2.4.9) (Rhodobacter sphaeroides), this protein is Protein nucleotidyltransferase YdiU.